We begin with the raw amino-acid sequence, 457 residues long: Argininosuccinate lyase (457 aa).

This sequence belongs to the lyase 1 family. Argininosuccinate lyase subfamily.

The protein resides in the cytoplasm. It carries out the reaction 2-(N(omega)-L-arginino)succinate = fumarate + L-arginine. It participates in amino-acid biosynthesis; L-arginine biosynthesis; L-arginine from L-ornithine and carbamoyl phosphate: step 3/3. The chain is Argininosuccinate lyase from Psychrobacter cryohalolentis (strain ATCC BAA-1226 / DSM 17306 / VKM B-2378 / K5).